Reading from the N-terminus, the 813-residue chain is Raf homolog serine/threonine-protein kinase (813 aa).

Residues 1-79 (MSRINFKKSS…GGAGTSDKEP (79 aa)) are disordered. Positions 9-23 (SSASTTPTSPHCPSP) are enriched in low complexity. The 77-residue stretch at 85-161 (KMIMVHLPFD…PGNELWVHSE (77 aa)) folds into the RBD domain. The Phorbol-ester/DAG-type zinc-finger motif lies at 170-217 (KHAIVRRTFIPPKSCDVCNNPIWMMGFRCEFCQFKFHQRCSSFAPLYC). The Zn(2+) site is built by C184, C187, C198, C201, H206, C209, and C217. Composition is skewed to polar residues over residues 258 to 273 (TSGQ…SHPD) and 291 to 301 (SPQNETSQLSP). Disordered regions lie at residues 258–315 (TSGQ…SAPN), 338–358 (QRLE…QARH), and 383–472 (TPLG…PHHE). A compositionally biased stretch (basic and acidic residues) spans 338–348 (QRLEEESRDKT). The segment covering 386–399 (GSNSPSSTCSSPPG) has biased composition (low complexity). Over residues 406-421 (TLGQSPNVSGSTTSSL) the composition is skewed to polar residues. Residues 453-462 (SPGERLDAQR) show a composition bias toward basic and acidic residues. The Protein kinase domain occupies 481–748 (FIIQYKVGSG…VLERLRDIIL (268 aa)). ATP-binding positions include 487 to 495 (VGSGSFGTV) and K507. The Proton acceptor role is filled by D602.

The protein belongs to the protein kinase superfamily. TKL Ser/Thr protein kinase family. RAF subfamily. As to quaternary structure, interacts with cdf-1 in a zinc-dependent manner which promotes its activity. The cofactor is Zn(2+).

The catalysed reaction is L-seryl-[protein] + ATP = O-phospho-L-seryl-[protein] + ADP + H(+). It carries out the reaction L-threonyl-[protein] + ATP = O-phospho-L-threonyl-[protein] + ADP + H(+). Its function is as follows. Protein kinase that participates in the induction of vulva and has roles in fertility and viability. Acts downstream of the Ras protein let-60. Required for progression of developing oocytes through the pachytene stage. Plays a role in responses to M.nematophilum-mediated bacterial infection by promoting tail swelling and preventing constipation. Positively regulates lifespan upstream of mek-2 and mpk-1. The polypeptide is Raf homolog serine/threonine-protein kinase (lin-45) (Caenorhabditis elegans).